A 156-amino-acid polypeptide reads, in one-letter code: Mitochondrial intermembrane space cysteine motif-containing protein MIX17 (156 aa).

Residues 1–21 constitute a mitochondrion transit peptide; that stretch reads MARSRGSSRPISRSRPTQTRS. Residues 1–21 are compositionally biased toward low complexity; the sequence is MARSRGSSRPISRSRPTQTRS. Disordered stretches follow at residues 1–50 and 78–110; these read MARS…GAQT and AGIT…QTQT. Over residues 84–110 the composition is skewed to polar residues; the sequence is FSGSGSDSAPVEQQQQNMANTSGQTQT. One can recognise a CHCH domain in the interval 115 to 156; the sequence is GRTCEIDARNFTRCLDENNGNFQICDYYLQQLKACQEAARQY. Residues 118–128 carry the Cx9C motif motif; that stretch reads CEIDARNFTRC. 2 disulfides stabilise this stretch: cysteine 118–cysteine 149 and cysteine 128–cysteine 139.

The protein resides in the mitochondrion intermembrane space. In Saccharomyces cerevisiae (strain ATCC 204508 / S288c) (Baker's yeast), this protein is Mitochondrial intermembrane space cysteine motif-containing protein MIX17 (MIX17).